Here is an 80-residue protein sequence, read N- to C-terminus: Large ribosomal subunit protein bL31B (80 aa).

This sequence belongs to the bacterial ribosomal protein bL31 family. Type B subfamily. Part of the 50S ribosomal subunit.

The sequence is that of Large ribosomal subunit protein bL31B from Exiguobacterium sp. (strain ATCC BAA-1283 / AT1b).